The following is a 309-amino-acid chain: Ribonuclease Z (309 aa).

Zn(2+) contacts are provided by His-63, His-65, Asp-67, His-68, His-143, Asp-213, and His-271. The active-site Proton acceptor is the Asp-67.

The protein belongs to the RNase Z family. As to quaternary structure, homodimer. Zn(2+) serves as cofactor.

The enzyme catalyses Endonucleolytic cleavage of RNA, removing extra 3' nucleotides from tRNA precursor, generating 3' termini of tRNAs. A 3'-hydroxy group is left at the tRNA terminus and a 5'-phosphoryl group is left at the trailer molecule.. Functionally, zinc phosphodiesterase, which displays some tRNA 3'-processing endonuclease activity. Probably involved in tRNA maturation, by removing a 3'-trailer from precursor tRNA. The protein is Ribonuclease Z of Phocaeicola vulgatus (strain ATCC 8482 / DSM 1447 / JCM 5826 / CCUG 4940 / NBRC 14291 / NCTC 11154) (Bacteroides vulgatus).